Here is a 336-residue protein sequence, read N- to C-terminus: Sulfate/thiosulfate import ATP-binding protein CysA (336 aa).

In terms of domain architecture, ABC transporter spans 3 to 233 (ITIENVSKSF…PASPFVMSFI (231 aa)). Residue 35-42 (GPSGSGKS) participates in ATP binding.

This sequence belongs to the ABC transporter superfamily. Sulfate/tungstate importer (TC 3.A.1.6) family. The complex is composed of two ATP-binding proteins (CysA), two transmembrane proteins (CysT and CysW) and a solute-binding protein (CysP).

The protein resides in the cell inner membrane. It carries out the reaction sulfate(out) + ATP + H2O = sulfate(in) + ADP + phosphate + H(+). The enzyme catalyses thiosulfate(out) + ATP + H2O = thiosulfate(in) + ADP + phosphate + H(+). Its function is as follows. Part of the ABC transporter complex CysAWTP involved in sulfate/thiosulfate import. Responsible for energy coupling to the transport system. The protein is Sulfate/thiosulfate import ATP-binding protein CysA of Thermosynechococcus vestitus (strain NIES-2133 / IAM M-273 / BP-1).